A 332-amino-acid polypeptide reads, in one-letter code: MLRDVLTLSRHVLQQFGSFTAEAQDFSALMNRIALAGKMIARRLSQAGLIEGALGVTGSLNVQGEEQQQMDDYANRAFIRALEQTGLVCRLVSEEMKTPARLPENCSLSRLALMIDPLDGSSNIDANLSVGSIFSVLHPLEDRPEADNQDLLQPGRRQLAAGYILYGPSTQLVYSVGKGVHGFTLDPSLGEFILSRSDIRIPERGSVYSLNEGYFCQWSEGIQNYVRYVHRRDGYISRYSGALVADFHRILLQGGVYLYPGTQKKPEGKLRLMYEANPLAFLAEQAGGAATTGTEAILDIVPQSLHQRVPLIIGSRENVEEVLRCLEGSLVP.

Positions 94, 116, 118, and 119 each coordinate Mg(2+). Substrate is bound by residues Asp119 to Ser122, Asn211, Tyr239, Tyr257 to Tyr259, and Lys269. A Mg(2+)-binding site is contributed by Glu275.

The protein belongs to the FBPase class 1 family. Homotetramer. Mg(2+) is required as a cofactor.

The protein resides in the cytoplasm. The enzyme catalyses beta-D-fructose 1,6-bisphosphate + H2O = beta-D-fructose 6-phosphate + phosphate. It participates in carbohydrate biosynthesis; Calvin cycle. This is Fructose-1,6-bisphosphatase class 1 from Synechococcus sp. (strain JA-2-3B'a(2-13)) (Cyanobacteria bacterium Yellowstone B-Prime).